The chain runs to 64 residues: Large ribosomal subunit protein uL29 (64 aa).

The protein belongs to the universal ribosomal protein uL29 family.

The sequence is that of Large ribosomal subunit protein uL29 from Cupriavidus metallidurans (strain ATCC 43123 / DSM 2839 / NBRC 102507 / CH34) (Ralstonia metallidurans).